The following is a 607-amino-acid chain: Guanine nucleotide-binding protein-like 1 (607 aa).

Residues 1-14 show a composition bias toward basic residues; the sequence is MPRKKPFSVKQKKK. Residues 1–81 form a disordered region; it reads MPRKKPFSVK…GPRGYDPNRY (81 aa). The span at 15 to 26 shows a compositional bias: basic and acidic residues; that stretch reads QLQDKRERKRGL. Serine 32, serine 33, and serine 34 each carry phosphoserine. A phosphothreonine mark is found at threonine 48 and threonine 50. 2 positions are modified to phosphoserine: serine 51 and serine 68. Positions 178 to 418 constitute a CP-type G domain; it reads WRQLWRVLEM…LCDCPGLIFP (241 aa). 225–228 is a GTP binding site; that stretch reads NKVD. Residue serine 324 is modified to Phosphoserine. GTP-binding positions include 367–374 and 411–415; these read GFPNVGKS and DCPGL. The disordered stretch occupies residues 547 to 607; sequence GPAGDEEEEE…PYALLGEDEC (61 aa). Residues 550–584 are compositionally biased toward acidic residues; sequence GDEEEEEEEELSSSCEEEGEEDRDADEEGEGDEET. Serine 561, serine 562, and serine 563 each carry phosphoserine.

This sequence belongs to the TRAFAC class YlqF/YawG GTPase family.

Functionally, possible regulatory or functional link with the histocompatibility cluster. This is Guanine nucleotide-binding protein-like 1 (GNL1) from Pan troglodytes (Chimpanzee).